The following is a 354-amino-acid chain: MTELKNDRYLRALLRQPVDVTPVWMMRQAGRYLPEYKATRAQAGDFMSLCKNAELACEVTLQPLRRYPLDAAILFSDILTVPDAMGLGLYFEAGEGPRFTSPVTCKADVDKLPIPDPEDELGYVMNAVRTIRRELKGEVPLIGFSGSPWTLATYMVEGSSSKAFTVIKKMMYADPQALHALLDKLAKSVTLYLNAQIKAGAQAVMIFDTWGGVLTGRDYQQFSLYYMHKIVDGLLRENDGRRVPVTLFTKGGGQWLEAMAETGCDALGLDWTTDIADARRRVGNKVALQGNMDPSMLYAPPARIEEEVATILAGFGHGEGHVFNLGHGIHQDVPPEHAGVFVEAVHRLSEQYHR.

Substrate-binding positions include R27–R31, D77, Y154, T209, and H327.

It belongs to the uroporphyrinogen decarboxylase family. Homodimer.

The protein localises to the cytoplasm. It catalyses the reaction uroporphyrinogen III + 4 H(+) = coproporphyrinogen III + 4 CO2. It functions in the pathway porphyrin-containing compound metabolism; protoporphyrin-IX biosynthesis; coproporphyrinogen-III from 5-aminolevulinate: step 4/4. In terms of biological role, catalyzes the decarboxylation of four acetate groups of uroporphyrinogen-III to yield coproporphyrinogen-III. The chain is Uroporphyrinogen decarboxylase from Escherichia fergusonii (strain ATCC 35469 / DSM 13698 / CCUG 18766 / IAM 14443 / JCM 21226 / LMG 7866 / NBRC 102419 / NCTC 12128 / CDC 0568-73).